Here is a 409-residue protein sequence, read N- to C-terminus: Failed axon connections homolog (409 aa).

The chain crosses the membrane as a helical span at residues 68–88 (YLTGGALLAAAAYLLHELLVI). Residues 372 to 409 (DEGAENSFSRTPDTDFTGHSLFDSDVDMDDYTEHEQCK) are disordered.

Belongs to the FAX family.

The protein localises to the membrane. May play a role in axonal development. This chain is Failed axon connections homolog (Faxc), found in Rattus norvegicus (Rat).